A 106-amino-acid chain; its full sequence is Large ribosomal subunit protein uL24 (106 aa).

This sequence belongs to the universal ribosomal protein uL24 family. Part of the 50S ribosomal subunit.

Its function is as follows. One of two assembly initiator proteins, it binds directly to the 5'-end of the 23S rRNA, where it nucleates assembly of the 50S subunit. Functionally, one of the proteins that surrounds the polypeptide exit tunnel on the outside of the subunit. The chain is Large ribosomal subunit protein uL24 from Albidiferax ferrireducens (strain ATCC BAA-621 / DSM 15236 / T118) (Rhodoferax ferrireducens).